The following is a 280-amino-acid chain: Fructose-1,6-bisphosphatase class 1 (280 aa).

4 residues coordinate Mg(2+): E64, D83, L85, and D86. Substrate contacts are provided by residues 86–89 (DGSS), Y190, and K221. A Mg(2+)-binding site is contributed by E227.

This sequence belongs to the FBPase class 1 family. In terms of assembly, homotetramer. Mg(2+) is required as a cofactor.

The protein localises to the cytoplasm. The enzyme catalyses beta-D-fructose 1,6-bisphosphate + H2O = beta-D-fructose 6-phosphate + phosphate. It functions in the pathway carbohydrate biosynthesis; gluconeogenesis. This Campylobacter hominis (strain ATCC BAA-381 / DSM 21671 / CCUG 45161 / LMG 19568 / NCTC 13146 / CH001A) protein is Fructose-1,6-bisphosphatase class 1.